The sequence spans 60 residues: ATP synthase subunit J, mitochondrial (60 aa).

Residues 13–32 (ILKPMLPFFLGGAIVFYGTV) form a helical membrane-spanning segment.

It belongs to the ATPase j subunit family. F-type ATPases have 2 components, CF(1) - the catalytic core - and CF(0) - the membrane proton channel. In yeast, the dimeric form of ATP synthase consists of 17 polypeptides: alpha, beta, gamma, delta, epsilon, 4 (B), 5 (OSCP), 6 (A), 8, 9 (C), d, E (Tim11), f, g, h, i/j and k.

Its subcellular location is the mitochondrion membrane. Mitochondrial membrane ATP synthase (F(1)F(0) ATP synthase or Complex V) produces ATP from ADP in the presence of a proton gradient across the membrane which is generated by electron transport complexes of the respiratory chain. F-type ATPases consist of two structural domains, F(1) - containing the extramembraneous catalytic core and F(0) - containing the membrane proton channel, linked together by a central stalk and a peripheral stalk. During catalysis, ATP synthesis in the catalytic domain of F(1) is coupled via a rotary mechanism of the central stalk subunits to proton translocation. Part of the complex F(0) domain. Minor subunit located with subunit a in the membrane. The sequence is that of ATP synthase subunit J, mitochondrial (atp18) from Schizosaccharomyces pombe (strain 972 / ATCC 24843) (Fission yeast).